A 568-amino-acid chain; its full sequence is Protein disconnected (568 aa).

The segment at 16 to 77 is disordered; sequence GHGPHSHQHV…PRRWGSPPIN (62 aa). Basic residues predominate over residues 19–29; it reads PHSHQHVHSHL. The span at 30–45 shows a compositional bias: low complexity; it reads PSHPQPNAASPASSPG. The span at 46–62 shows a compositional bias: gly residues; it reads GSSGSGSGSAAGSGTGS. 2 C2H2-type zinc fingers span residues 92-115 and 120-145; these read VQCS…SAVH and HKCT…ANPN. Disordered stretches follow at residues 134-157, 220-364, 391-419, and 501-568; these read RRSR…RRKI, LLST…SDAF, SSAS…DSDS, and QQYN…PISV. A compositionally biased stretch (acidic residues) spans 235–246; that stretch reads NEQDADPEDDND. A compositionally biased stretch (polar residues) spans 253 to 263; the sequence is QANSSSPAASS. Residues 282–292 are compositionally biased toward low complexity; the sequence is SLSLASSSSIA. Residues 313–360 show a composition bias toward basic and acidic residues; it reads SEQDREQEQEQEQEREREAEKEQEQDVESDKEHEPEQEHELEREKRSP. A compositionally biased stretch (low complexity) spans 391–402; sequence SSASSSSASASA. Residues 520–550 show a composition bias toward basic residues; sequence HLTLSHHHQEQHHHLGHHHMGHHHHHHHQHH. Residues 558–568 show a composition bias toward polar residues; the sequence is SPAATNAPISV.

In terms of tissue distribution, expressed at low levels in the adult head and very low, but detectable, levels in the body.

The protein resides in the nucleus. Its function is as follows. Required for the establishment of stable connections between the larval optic nerves, the Bolwig's nerves, and their target cells in the brain during embryonic development. In Drosophila melanogaster (Fruit fly), this protein is Protein disconnected (disco).